We begin with the raw amino-acid sequence, 271 residues long: L-aspartate dehydrogenase (271 aa).

Residues A124 and N192 each contribute to the NAD(+) site. H222 is an active-site residue.

Belongs to the L-aspartate dehydrogenase family.

It catalyses the reaction L-aspartate + NADP(+) + H2O = oxaloacetate + NH4(+) + NADPH + H(+). The catalysed reaction is L-aspartate + NAD(+) + H2O = oxaloacetate + NH4(+) + NADH + H(+). Its pathway is cofactor biosynthesis; NAD(+) biosynthesis; iminoaspartate from L-aspartate (dehydrogenase route): step 1/1. Specifically catalyzes the NAD or NADP-dependent dehydrogenation of L-aspartate to iminoaspartate. In Methanosarcina acetivorans (strain ATCC 35395 / DSM 2834 / JCM 12185 / C2A), this protein is L-aspartate dehydrogenase.